The chain runs to 630 residues: 1-deoxy-D-xylulose-5-phosphate synthase (630 aa).

Residues H75 and 116-118 each bind thiamine diphosphate; that span reads GHS. D147 is a Mg(2+) binding site. Thiamine diphosphate-binding positions include 148–149, N176, Y287, and E367; that span reads GA. N176 serves as a coordination point for Mg(2+).

Belongs to the transketolase family. DXPS subfamily. As to quaternary structure, homodimer. Mg(2+) serves as cofactor. Requires thiamine diphosphate as cofactor.

The enzyme catalyses D-glyceraldehyde 3-phosphate + pyruvate + H(+) = 1-deoxy-D-xylulose 5-phosphate + CO2. It functions in the pathway metabolic intermediate biosynthesis; 1-deoxy-D-xylulose 5-phosphate biosynthesis; 1-deoxy-D-xylulose 5-phosphate from D-glyceraldehyde 3-phosphate and pyruvate: step 1/1. Its function is as follows. Catalyzes the acyloin condensation reaction between C atoms 2 and 3 of pyruvate and glyceraldehyde 3-phosphate to yield 1-deoxy-D-xylulose-5-phosphate (DXP). This is 1-deoxy-D-xylulose-5-phosphate synthase from Treponema pallidum (strain Nichols).